The chain runs to 71 residues: Prokaryotic ubiquitin-like protein Pup (71 aa).

Residues 1–30 (MPSASGHHQIPAETQRHDDDQTQETAQGLS) form a disordered region. The stretch at 23-56 (QETAQGLSAAAMLAQEQADDLDAILDDIETVLET) forms a coiled coil. The tract at residues 27-65 (QGLSAAAMLAQEQADDLDAILDDIETVLETNAEEYVSSF) is ARC ATPase binding. E71 participates in a covalent cross-link: Isoglutamyl lysine isopeptide (Glu-Lys) (interchain with K-? in acceptor proteins).

The protein belongs to the prokaryotic ubiquitin-like protein family. As to quaternary structure, strongly interacts with the proteasome-associated ATPase ARC through a hydrophobic interface; the interacting region of Pup lies in its C-terminal half. There is one Pup binding site per ARC hexamer ring.

It functions in the pathway protein degradation; proteasomal Pup-dependent pathway. In terms of biological role, protein modifier that is covalently attached to lysine residues of substrate proteins, thereby targeting them for proteasomal degradation. The tagging system is termed pupylation. The sequence is that of Prokaryotic ubiquitin-like protein Pup from Bifidobacterium animalis subsp. lactis (strain AD011).